The chain runs to 188 residues: Elongation factor P (188 aa).

This sequence belongs to the elongation factor P family.

Its subcellular location is the cytoplasm. Its pathway is protein biosynthesis; polypeptide chain elongation. Functionally, involved in peptide bond synthesis. Stimulates efficient translation and peptide-bond synthesis on native or reconstituted 70S ribosomes in vitro. Probably functions indirectly by altering the affinity of the ribosome for aminoacyl-tRNA, thus increasing their reactivity as acceptors for peptidyl transferase. This is Elongation factor P from Ureaplasma urealyticum serovar 10 (strain ATCC 33699 / Western).